The sequence spans 671 residues: DNA ligase (671 aa).

NAD(+) contacts are provided by residues 32-36 (DAEYD), 81-82 (SL), and Glu-113. Lys-115 functions as the N6-AMP-lysine intermediate in the catalytic mechanism. NAD(+) is bound by residues Arg-136, Glu-173, Lys-290, and Lys-314. Residues Cys-408, Cys-411, Cys-426, and Cys-432 each coordinate Zn(2+). One can recognise a BRCT domain in the interval 593–671 (EIDSPFAGKT…EAEMLRLLGS (79 aa)).

The protein belongs to the NAD-dependent DNA ligase family. LigA subfamily. Mg(2+) is required as a cofactor. It depends on Mn(2+) as a cofactor.

The enzyme catalyses NAD(+) + (deoxyribonucleotide)n-3'-hydroxyl + 5'-phospho-(deoxyribonucleotide)m = (deoxyribonucleotide)n+m + AMP + beta-nicotinamide D-nucleotide.. DNA ligase that catalyzes the formation of phosphodiester linkages between 5'-phosphoryl and 3'-hydroxyl groups in double-stranded DNA using NAD as a coenzyme and as the energy source for the reaction. It is essential for DNA replication and repair of damaged DNA. This chain is DNA ligase, found in Escherichia coli (strain ATCC 8739 / DSM 1576 / NBRC 3972 / NCIMB 8545 / WDCM 00012 / Crooks).